The sequence spans 1404 residues: DNA-directed RNA polymerase subunit beta' (1404 aa).

4 residues coordinate Zn(2+): C60, C62, C75, and C78. Positions 449, 451, and 453 each coordinate Mg(2+). Zn(2+) is bound by residues C778, C852, C859, and C862. The disordered stretch occupies residues 1381–1404 (DRPLEEEEEEEIPQSIADDSDGDE). The span at 1384-1404 (LEEEEEEEIPQSIADDSDGDE) shows a compositional bias: acidic residues.

The protein belongs to the RNA polymerase beta' chain family. In terms of assembly, the RNAP catalytic core consists of 2 alpha, 1 beta, 1 beta' and 1 omega subunit. When a sigma factor is associated with the core the holoenzyme is formed, which can initiate transcription. Mg(2+) serves as cofactor. Zn(2+) is required as a cofactor.

It catalyses the reaction RNA(n) + a ribonucleoside 5'-triphosphate = RNA(n+1) + diphosphate. In terms of biological role, DNA-dependent RNA polymerase catalyzes the transcription of DNA into RNA using the four ribonucleoside triphosphates as substrates. The polypeptide is DNA-directed RNA polymerase subunit beta' (Leptospira borgpetersenii serovar Hardjo-bovis (strain L550)).